A 196-amino-acid chain; its full sequence is Small ribosomal subunit protein uS4c (196 aa).

Positions 17–36 (ALPGLTRKTPKSGSNLKKKF) are disordered. In terms of domain architecture, S4 RNA-binding spans 89-157 (MRLDNILFRL…VQNYIASSDP (69 aa)).

This sequence belongs to the universal ribosomal protein uS4 family. Part of the 30S ribosomal subunit. Contacts protein S5. The interaction surface between S4 and S5 is involved in control of translational fidelity.

It is found in the plastid. Its subcellular location is the chloroplast. One of the primary rRNA binding proteins, it binds directly to 16S rRNA where it nucleates assembly of the body of the 30S subunit. In terms of biological role, with S5 and S12 plays an important role in translational accuracy. The polypeptide is Small ribosomal subunit protein uS4c (rps4) (Calamagrostis epigeios (Wood small-reed grass)).